Consider the following 788-residue polypeptide: MVRTKNQSSSSSASSSSHKSPIKSHGGSGSAAAGTAGHPVSRSSSSHRTSIDDRKSATNVSSSSNRRTTPGSSPDGDGDDDTTTTDDLTPTSTSAPRSAGGPSSVHKQNLYVVSFPIIFLFNVLRSLIYQLFCIFRYLYGASTKVIYRPHRRDCNIEIVVQNNSNNKDQKHQQLTSSQSLNYPLEVTSGEAASEQQVQQPLPQQRYRALQPLEMAGANRSGSGYSPGPGDPLLAKQKHHHRRAFEYISKALKIDEENEGHKELAIELYRKGIKELEDGIAVDCWSGRGDVWDRAQRLHDKMQTNLSMARDRLHFLALREEDFQMHRLSLKEEQKPNPSREQHQKPQKAREAADKPMLTNLTNDPVKLKTRSSGYGPKNGLTTPRISATATTPTSSSSLASGRKLTIGTKRPGNLAVAANKSQTLPRNLGSKTSVGAVRQPGKTAATPPAVRRQFSSGRNTPPQRSRTPINNNGASGSGSGASTPVVTVKGVEQKLVQLILDEIVEGGAKVEWTDIAGQEVAKQALQEMVILPSVRPELFTGLRAPAKGLLLFGPPGNGKTLLARAVATECSATFLNISAASLTSKYVGDGEKLVRALFAVARHLQPSIIFIDEVDSLLSERSSGEHEASRRLKTEFLVEFDGLPGNPDGDRIVVLAATNRPQELDEAALRRFTKRVYVSLPDEQTRELLLNRLLQKQGSPLDTDALRRLSKITDGYSGSDLTALAKDAALEPIRELNVEQVKCLDINAMRHITEKDFHNSLKRIRRSVAQQSLSSYEKWSSDYGDITI.

The interval methionine 1–valine 105 is disordered. At methionine 1 to proline 116 the chain is on the cytoplasmic side. Positions methionine 1 to glycine 227 are required for localization to punctate cytoplasmic foci. Low complexity-rich tracts occupy residues serine 8 to arginine 48 and alanine 57 to aspartate 75. Positions isoleucine 117–tyrosine 137 form an intramembrane region, helical. Over leucine 138–isoleucine 788 the chain is Cytoplasmic. The tract at residues glycine 227 to isoleucine 788 is sufficient for interaction with microtubules and microtubule severing. The 76-residue stretch at histidine 240 to leucine 315 folds into the MIT domain. Basic and acidic residues predominate over residues lysine 330–aspartate 353. Residues lysine 330–proline 484 form a disordered region. Low complexity predominate over residues leucine 380–serine 400. 2 stretches are compositionally biased toward polar residues: residues asparagine 419–serine 433 and glutamine 453–isoleucine 469. The interval asparagine 471–valine 485 is required for interaction with microtubules. Glycine 553 to threonine 560 provides a ligand contact to ATP.

Belongs to the AAA ATPase family. Spastin subfamily. As to quaternary structure, homohexamer. The homohexamer is stabilized by ATP-binding. The homohexamer may adopt a ring conformation through which microtubules pass prior to being severed. Interacts with microtubules. Interacts with atl; may be involved in microtubule dynamics.

It is found in the membrane. It localises to the cytoplasm. The protein localises to the cytoskeleton. Its subcellular location is the microtubule organizing center. The protein resides in the centrosome. It is found in the chromosome. It localises to the lipid droplet. The enzyme catalyses n ATP + n H2O + a microtubule = n ADP + n phosphate + (n+1) alpha/beta tubulin heterodimers.. Its function is as follows. ATP-dependent microtubule severing protein. Stimulates microtubule minus-end depolymerization and poleward microtubule flux in the mitotic spindle. Regulates microtubule stability in the neuromuscular junction synapse. Involved in lipid metabolism by regulating the size and distribution of lipid droplets. Involved in axon regeneration by regulating microtubule severing. The protein is Spastin of Drosophila pseudoobscura pseudoobscura (Fruit fly).